We begin with the raw amino-acid sequence, 255 residues long: tRNA pseudouridine synthase B (255 aa).

Asp-58 serves as the catalytic Nucleophile.

This sequence belongs to the pseudouridine synthase TruB family. Type 1 subfamily.

It carries out the reaction uridine(55) in tRNA = pseudouridine(55) in tRNA. Functionally, responsible for synthesis of pseudouridine from uracil-55 in the psi GC loop of transfer RNAs. The sequence is that of tRNA pseudouridine synthase B from Chlorobium chlorochromatii (strain CaD3).